Reading from the N-terminus, the 353-residue chain is Deoxyribonuclease-2-alpha (353 aa).

The N-terminal stretch at 1-19 (MATLRSLLLAALLWVPAEA) is a signal peptide. A disulfide bridge connects residues C22 and C161. N-linked (GlcNAc...) asparagine glycans are attached at residues N71, N88, N214, and N268. Disulfide bonds link C269-C349 and C310-C329. The active site involves H297.

The protein belongs to the DNase II family. In terms of tissue distribution, highly expressed in fetal liver macrophages.

The protein resides in the lysosome. The catalysed reaction is Endonucleolytic cleavage to nucleoside 3'-phosphates and 3'-phosphooligonucleotide end-products.. Functionally, hydrolyzes DNA under acidic conditions with a preference for double-stranded DNA. Plays a major role in the clearance of nucleic acids generated through apoptosis, hence preventing autoinflammation. Necessary for proper fetal development and for definitive erythropoiesis in fetal liver and bone marrow, where it degrades nuclear DNA expelled from erythroid precursor cells. The sequence is that of Deoxyribonuclease-2-alpha (Dnase2) from Mus musculus (Mouse).